Here is a 1894-residue protein sequence, read N- to C-terminus: Fibronectin type III domain-containing protein 1 (1894 aa).

An N-terminal signal peptide occupies residues 1 to 32; the sequence is MAPEAGATLRAPRRLSWAALLLLAALLPVASS. The Fibronectin type-III 1 domain occupies 39-131; that stretch reads HPLKPRHVKL…PVYRAESPPG (93 aa). N-linked (GlcNAc...) asparagine glycosylation is present at N149. 3 Fibronectin type-III domains span residues 158-258, 262-357, and 362-457; these read PNKP…SEED, VPDD…TPES, and APEN…MPTT. 4 disordered regions span residues 455 to 500, 515 to 1271, 1311 to 1350, and 1444 to 1515; these read PTTS…PQGR, ANGG…TVSP, LSRQ…IING, and THPP…CPPG. Residues 565–574 show a composition bias toward basic residues; sequence TLRPPSRHGH. A compositionally biased stretch (low complexity) spans 614–625; sequence PSASASPAHHAS. Polar residues predominate over residues 626-641; it reads TQGTSHRPSLPASLND. Low complexity-rich tracts occupy residues 711-722 and 759-778; these read SASAPPSRLSPP and SRST…TQVS. S717 carries the phosphoserine modification. A compositionally biased stretch (basic and acidic residues) spans 786–799; sequence GESHGDGDREDGGR. 2 stretches are compositionally biased toward polar residues: residues 941–957 and 1027–1060; these read KYSS…QSTD and SPSQ…TASS. Residues 1071 to 1088 show a composition bias toward acidic residues; sequence QDEDAQGSYDDDSTEVEA. Positions 1166-1176 are enriched in polar residues; sequence PLSSKSQQSVS. Positions 1197–1209 are enriched in low complexity; sequence SSSVPKWPSSSTP. The segment covering 1211-1226 has biased composition (basic and acidic residues); sequence GGKDADGSLAKEEREP. The span at 1445–1504 shows a compositional bias: low complexity; it reads HPPTTTMQPTTTTTPLPTTTTPRPTTATTRRTTTTRRTTTRRPTTTVRTTTRTTTTTTPT. The Fibronectin type-III 5 domain maps to 1658–1752; it reads APRNITVVAV…PSVSFVTESD (95 aa). N1661 is a glycosylation site (N-linked (GlcNAc...) asparagine).

Almost absent from healthy skin; especially in epidermal keratinocytes, skin fibroblasts or endothelial cells and is barely detectable in benign melanocytic naevi. Expressed in the stroma close to skin tumors, in the tumor cells themselves and in the epidermis of psoriasis.

It is found in the secreted. Its function is as follows. May be an activator of G protein signaling. This chain is Fibronectin type III domain-containing protein 1 (FNDC1), found in Homo sapiens (Human).